We begin with the raw amino-acid sequence, 532 residues long: Flavin-containing monooxygenase 1 (532 aa).

Position 2 is an N-acetylalanine (A2). Residues 2 to 510 (AKRVAIVGAG…TRIVKESPSP (509 aa)) lie on the Lumenal side of the membrane. FAD is bound by residues 9–13 (GAGVS), E32, 40–41 (LW), and 61–62 (NS). An NADP(+)-binding site is contributed by 60–61 (SN). N-linked (GlcNAc...) (high mannose) asparagine glycosylation is present at N120. 195–198 (SGTD) contacts NADP(+). Residues 511 to 531 (FASLLKLFSFLALLVAIFQIF) form a helical membrane-spanning segment. Position 532 (L532) is a topological domain, cytoplasmic.

This sequence belongs to the FMO family. Requires FAD as cofactor. As to expression, liver.

It localises to the endoplasmic reticulum membrane. It catalyses the reaction hypotaurine + NADPH + O2 + H(+) = taurine + NADP(+) + H2O. The catalysed reaction is hypotaurine + NADH + O2 + H(+) = taurine + NAD(+) + H2O. The enzyme catalyses trimethylamine + NADPH + O2 = trimethylamine N-oxide + NADP(+) + H2O. It carries out the reaction N,N-dimethylaniline + NADPH + O2 + H(+) = N,N-dimethylaniline N-oxide + NADP(+) + H2O. Its function is as follows. Broad spectrum monooxygenase that catalyzes the oxygenation of a wide variety of nitrogen- and sulfur-containing compounds including xenobiotics. Catalyzes the S-oxygenation of hypotaurine to produce taurine, an organic osmolyte involved in cell volume regulation as well as a variety of cytoprotective and developmental processes. In vitro, catalyzes the N-oxygenation of trimethylamine (TMA) to produce trimethylamine N-oxide (TMAO) and could therefore participate to the detoxification of this compound that is generated by the action of gut microbiota from dietary precursors such as choline, choline containing compounds, betaine or L-carnitine. The protein is Flavin-containing monooxygenase 1 (FMO1) of Sus scrofa (Pig).